Here is a 466-residue protein sequence, read N- to C-terminus: Oryzain beta chain (466 aa).

The N-terminal stretch at 1-21 (MAARAAAAAFLLLLIVGAATA) is a signal peptide. Positions 22–140 (APDMSIISYN…ERYRHDGVEE (119 aa)) are cleaved as a propeptide — activation peptide. 3 disulfides stabilise this stretch: cysteine 162–cysteine 205, cysteine 196–cysteine 238, and cysteine 296–cysteine 347. Cysteine 165 is an active-site residue. Residues histidine 302 and asparagine 322 contribute to the active site. N-linked (GlcNAc...) asparagine glycosylation is present at asparagine 341. Residues 358-380 (KSGANPPKPSPTPPTPPTPPPPS) form a disordered region. A propeptide spans 362–466 (NPPKPSPTPP…KRTLAKLNTA (105 aa)) (removed in mature form). Residues 363–380 (PPKPSPTPPTPPTPPPPS) are compositionally biased toward pro residues. Intrachain disulfides connect cysteine 386–cysteine 398 and cysteine 392–cysteine 413. The N-linked (GlcNAc...) asparagine glycan is linked to asparagine 389.

It belongs to the peptidase C1 family. In terms of tissue distribution, expressed only in seeds.

In terms of biological role, probable thiol protease. The chain is Oryzain beta chain from Oryza sativa subsp. japonica (Rice).